Here is a 370-residue protein sequence, read N- to C-terminus: Probable protein phosphatase 2C 67 (370 aa).

One can recognise a PPM-type phosphatase domain in the interval Thr35–Leu344. The Mn(2+) site is built by Asp77, Gly78, Asp276, and Asp335.

The protein belongs to the PP2C family. As to quaternary structure, interacts with SAUR19. Interacts with AHA2 at the plasma membrane. It depends on Mg(2+) as a cofactor. Mn(2+) is required as a cofactor.

Its subcellular location is the cell membrane. The catalysed reaction is O-phospho-L-seryl-[protein] + H2O = L-seryl-[protein] + phosphate. The enzyme catalyses O-phospho-L-threonyl-[protein] + H2O = L-threonyl-[protein] + phosphate. In terms of biological role, dephosphorylates and represses plasma membrane H(+)-ATPases (PM H(+)-ATPases, e.g. AHA1 and AHA2), thus influencing negatively plant growth and fitness. Promotes the apical hook maintenance of etiolated seedlings. The chain is Probable protein phosphatase 2C 67 from Arabidopsis thaliana (Mouse-ear cress).